The following is a 142-amino-acid chain: MFLGTHPVRLDDKNRFVLPAKFRGMLDSVVLTRGQERCLYLFDRSEFERISDGIRNTALSQKKVRDYLRIFLSGAAAQLPDRQHRIVIANHLRAYADLKKEVTVIGAGKHIEIWDSEAWSSYLEEQEAAFSEIAEEVIPGLI.

SpoVT-AbrB domains follow at residues 5–46 and 75–118; these read THPV…DRSE and AAAQ…DSEA.

It belongs to the MraZ family. Forms oligomers.

It is found in the cytoplasm. It localises to the nucleoid. The polypeptide is Transcriptional regulator MraZ (Tropheryma whipplei (strain TW08/27) (Whipple's bacillus)).